A 287-amino-acid polypeptide reads, in one-letter code: ATP synthase gamma chain (287 aa).

This sequence belongs to the ATPase gamma chain family. In terms of assembly, F-type ATPases have 2 components, CF(1) - the catalytic core - and CF(0) - the membrane proton channel. CF(1) has five subunits: alpha(3), beta(3), gamma(1), delta(1), epsilon(1). CF(0) has three main subunits: a, b and c.

The protein resides in the cell inner membrane. Its function is as follows. Produces ATP from ADP in the presence of a proton gradient across the membrane. The gamma chain is believed to be important in regulating ATPase activity and the flow of protons through the CF(0) complex. The polypeptide is ATP synthase gamma chain (Citrobacter koseri (strain ATCC BAA-895 / CDC 4225-83 / SGSC4696)).